The following is a 249-amino-acid chain: Leucyl/phenylalanyl-tRNA--protein transferase (249 aa).

Belongs to the L/F-transferase family.

It is found in the cytoplasm. It carries out the reaction N-terminal L-lysyl-[protein] + L-leucyl-tRNA(Leu) = N-terminal L-leucyl-L-lysyl-[protein] + tRNA(Leu) + H(+). The enzyme catalyses N-terminal L-arginyl-[protein] + L-leucyl-tRNA(Leu) = N-terminal L-leucyl-L-arginyl-[protein] + tRNA(Leu) + H(+). It catalyses the reaction L-phenylalanyl-tRNA(Phe) + an N-terminal L-alpha-aminoacyl-[protein] = an N-terminal L-phenylalanyl-L-alpha-aminoacyl-[protein] + tRNA(Phe). In terms of biological role, functions in the N-end rule pathway of protein degradation where it conjugates Leu, Phe and, less efficiently, Met from aminoacyl-tRNAs to the N-termini of proteins containing an N-terminal arginine or lysine. This Xanthomonas axonopodis pv. citri (strain 306) protein is Leucyl/phenylalanyl-tRNA--protein transferase.